The sequence spans 347 residues: Holliday junction branch migration complex subunit RuvB (347 aa).

Positions 4–184 are large ATPase domain (RuvB-L); sequence QDRIVDGHAS…FGIVQRLEFY (181 aa). ATP is bound by residues arginine 24, glycine 65, lysine 68, threonine 69, threonine 70, 131-133, arginine 174, tyrosine 184, and arginine 221; that span reads EDF. Threonine 69 provides a ligand contact to Mg(2+). The interval 185-255 is small ATPAse domain (RuvB-S); the sequence is SVQDLTHIVK…IADSALNMLN (71 aa). Residues 258 to 347 are head domain (RuvB-H); it reads HHGFDHMDRR…SQQQDSLPGI (90 aa). Positions 294, 313, and 318 each coordinate DNA.

This sequence belongs to the RuvB family. In terms of assembly, homohexamer. Forms an RuvA(8)-RuvB(12)-Holliday junction (HJ) complex. HJ DNA is sandwiched between 2 RuvA tetramers; dsDNA enters through RuvA and exits via RuvB. An RuvB hexamer assembles on each DNA strand where it exits the tetramer. Each RuvB hexamer is contacted by two RuvA subunits (via domain III) on 2 adjacent RuvB subunits; this complex drives branch migration. In the full resolvosome a probable DNA-RuvA(4)-RuvB(12)-RuvC(2) complex forms which resolves the HJ.

It is found in the cytoplasm. The catalysed reaction is ATP + H2O = ADP + phosphate + H(+). In terms of biological role, the RuvA-RuvB-RuvC complex processes Holliday junction (HJ) DNA during genetic recombination and DNA repair, while the RuvA-RuvB complex plays an important role in the rescue of blocked DNA replication forks via replication fork reversal (RFR). RuvA specifically binds to HJ cruciform DNA, conferring on it an open structure. The RuvB hexamer acts as an ATP-dependent pump, pulling dsDNA into and through the RuvAB complex. RuvB forms 2 homohexamers on either side of HJ DNA bound by 1 or 2 RuvA tetramers; 4 subunits per hexamer contact DNA at a time. Coordinated motions by a converter formed by DNA-disengaged RuvB subunits stimulates ATP hydrolysis and nucleotide exchange. Immobilization of the converter enables RuvB to convert the ATP-contained energy into a lever motion, pulling 2 nucleotides of DNA out of the RuvA tetramer per ATP hydrolyzed, thus driving DNA branch migration. The RuvB motors rotate together with the DNA substrate, which together with the progressing nucleotide cycle form the mechanistic basis for DNA recombination by continuous HJ branch migration. Branch migration allows RuvC to scan DNA until it finds its consensus sequence, where it cleaves and resolves cruciform DNA. In Teredinibacter turnerae (strain ATCC 39867 / T7901), this protein is Holliday junction branch migration complex subunit RuvB.